A 222-amino-acid polypeptide reads, in one-letter code: Glutathione S-transferase A2 (222 aa).

Ala2 carries the post-translational modification N-acetylalanine. One can recognise a GST N-terminal domain in the interval 3 to 83 (EKPKLHYSNI…YIASKYNLYG (81 aa)). N6-succinyllysine is present on Lys4. Glutathione-binding positions include Tyr9, Arg45, 54-55 (QV), and 67-68 (QT). Residues 85-207 (DIKEKALIDM…LQPGSPRKPP (123 aa)) form the GST C-terminal domain. Residues 199 to 222 (QPGSPRKPPMDEKSLEESRKIFRF) form a disordered region. The segment covering 206–222 (PPMDEKSLEESRKIFRF) has biased composition (basic and acidic residues).

It belongs to the GST superfamily. Alpha family. Homodimer or heterodimer of GSTA1 and GSTA2. In terms of tissue distribution, liver.

The protein resides in the cytoplasm. It catalyses the reaction RX + glutathione = an S-substituted glutathione + a halide anion + H(+). Catalyzes the conjugation of glutathione to a large variety of electrophilic compounds. This chain is Glutathione S-transferase A2 (GSTA2), found in Homo sapiens (Human).